The sequence spans 182 residues: Ferredoxin-thioredoxin reductase subunit A1, chloroplastic (182 aa).

The N-terminal 81 residues, 1-81 (MSSQIALSPA…VAIKSADSIN (81 aa)), are a transit peptide targeting the chloroplast.

It belongs to the ferredoxin thioredoxin reductase alpha subunit family. In terms of assembly, heterodimer of subunit A (variable subunit) and subunit B (catalytic subunit). Heterodimeric FTR forms a complex with ferredoxin and thioredoxin.

It localises to the plastid. Its subcellular location is the chloroplast. Its function is as follows. Variable subunit of the ferredoxin-thioredoxin reductase (FTR), which catalyzes the two-electron reduction of thioredoxins by the electrons provided by reduced ferredoxin. In Arabidopsis thaliana (Mouse-ear cress), this protein is Ferredoxin-thioredoxin reductase subunit A1, chloroplastic.